Here is a 147-residue protein sequence, read N- to C-terminus: Large ribosomal subunit protein mL40 (147 aa).

The transit peptide at 1–26 directs the protein to the mitochondrion; it reads MLAQTFKKPHRAVLEQVSGTTVFIRN.

This sequence belongs to the mitochondrion-specific ribosomal protein mL40 family. Component of the mitochondrial large ribosomal subunit (mt-LSU). Mature yeast 74S mitochondrial ribosomes consist of a small (37S) and a large (54S) subunit. The 37S small subunit contains a 15S ribosomal RNA (15S mt-rRNA) and 34 different proteins. The 54S large subunit contains a 21S rRNA (21S mt-rRNA) and 46 different proteins.

Its subcellular location is the mitochondrion. In terms of biological role, component of the mitochondrial ribosome (mitoribosome), a dedicated translation machinery responsible for the synthesis of mitochondrial genome-encoded proteins, including at least some of the essential transmembrane subunits of the mitochondrial respiratory chain. The mitoribosomes are attached to the mitochondrial inner membrane and translation products are cotranslationally integrated into the membrane. The protein is Large ribosomal subunit protein mL40 (MRPL28) of Saccharomyces cerevisiae (strain ATCC 204508 / S288c) (Baker's yeast).